Reading from the N-terminus, the 713-residue chain is Ribosomal RNA large subunit methyltransferase K/L (713 aa).

Positions 43–154 (LAYRITLWTR…NGVITIAMNF (112 aa)) constitute a THUMP domain.

The protein belongs to the methyltransferase superfamily. RlmKL family.

The protein resides in the cytoplasm. The enzyme catalyses guanosine(2445) in 23S rRNA + S-adenosyl-L-methionine = N(2)-methylguanosine(2445) in 23S rRNA + S-adenosyl-L-homocysteine + H(+). The catalysed reaction is guanosine(2069) in 23S rRNA + S-adenosyl-L-methionine = N(2)-methylguanosine(2069) in 23S rRNA + S-adenosyl-L-homocysteine + H(+). Its function is as follows. Specifically methylates the guanine in position 2445 (m2G2445) and the guanine in position 2069 (m7G2069) of 23S rRNA. The polypeptide is Ribosomal RNA large subunit methyltransferase K/L (Shewanella sp. (strain MR-4)).